We begin with the raw amino-acid sequence, 579 residues long: Putative truncated flagellar export/assembly protein LfhA (579 aa).

3 helical membrane passes run 86–106 (AIAG…IGIF), 124–144 (IGDG…AAII), and 177–197 (FVLA…SALL).

The protein belongs to the FHIPEP (flagella/HR/invasion proteins export pore) family.

Its subcellular location is the cell inner membrane. This chain is Putative truncated flagellar export/assembly protein LfhA, found in Escherichia coli (strain K12).